A 517-amino-acid polypeptide reads, in one-letter code: Alpha,alpha-trehalose-phosphate synthase [UDP-forming] 1 (517 aa).

Tyrosine 98 and aspartate 152 together coordinate D-glucose 6-phosphate. UDP is bound by residues arginine 288 and lysine 293. Positions 288 and 293 each coordinate UDP-alpha-D-glucose. Arginine 326 is a D-glucose 6-phosphate binding site. Position 387–395 (aspartate 387–glutamate 395) interacts with UDP-alpha-D-glucose. Leucine 391–glutamate 395 serves as a coordination point for UDP. The segment at phenylalanine 486–glutamine 517 is disordered. Residues phenylalanine 493–glutamine 517 show a composition bias toward polar residues.

The protein belongs to the glycosyltransferase 20 family.

It catalyses the reaction D-glucose 6-phosphate + UDP-alpha-D-glucose = alpha,alpha-trehalose 6-phosphate + UDP + H(+). It participates in carbohydrate biosynthesis. Synthase catalytic subunit of the trehalose synthase complex that catalyzes the production of trehalose from glucose-6-phosphate and UDP-alpha-D-glucose in a two step process. In Aspergillus niger, this protein is Alpha,alpha-trehalose-phosphate synthase [UDP-forming] 1.